The sequence spans 197 residues: MTSGAGWEEQVFLPITNSISSEDNNQIKIGSSVSIEYNQNGQHVSQIDDKGLHNILVLTGYAIDESTGELVPTFDPCDYVKGILISGKILKGNHFKIIGIPSNKLYIIRKKDVHGNITFSLPIKNFNTGTYQVDLRDKVTSFVSLDRDVAKTIVDNVLAKIYAKIYNSLNKEQKDKLYRDVEEIFNYYSIKSLKSNP.

The protein belongs to the CRISPR system Cmr7 family. Possible homodimer. Part of the CMR ribonucleoprotein complex, consisting of crRNA plus Cmr1/Cmr2/Cmr3/Cmr4/Cmr5/Cmr6 at 1:1 and possibly 3 Cmr7 dimers. A Cmr2/Cmr3/Cmr7 subcomplex without crRNA can also be isolated. It does not cleave target RNA.

Its subcellular location is the cytoplasm. CRISPR (clustered regularly interspaced short palindromic repeat) is an adaptive immune system that provides protection against mobile genetic elements (viruses, transposable elements and conjugative plasmids). CRISPR clusters contain spacers, sequences complementary to antecedent mobile elements, and target invading nucleic acids. CRISPR clusters are transcribed and processed into CRISPR RNA (crRNA). The CMR complex degrades RNA complementary to the crRNA (target RNA) within UA dinucleotides, generating 3'-OH and 5'-phosphate ends. Activity is dependent on the 8 nt long 5' tag in the crRNA, an unpaired 3' flag on the target RNA, and is stimulated by ATP. Some cleavage of the guide crRNA can also be observed. This is CRISPR system CMR subunit Cmr7 1 (cmr7A) from Saccharolobus solfataricus (strain ATCC 35092 / DSM 1617 / JCM 11322 / P2) (Sulfolobus solfataricus).